The sequence spans 194 residues: ATP-dependent Clp protease proteolytic subunit (194 aa).

The active-site Nucleophile is S98. H123 is an active-site residue.

It belongs to the peptidase S14 family. As to quaternary structure, component of the chloroplastic Clp protease core complex.

It localises to the plastid. The protein resides in the cyanelle. The catalysed reaction is Hydrolysis of proteins to small peptides in the presence of ATP and magnesium. alpha-casein is the usual test substrate. In the absence of ATP, only oligopeptides shorter than five residues are hydrolyzed (such as succinyl-Leu-Tyr-|-NHMec, and Leu-Tyr-Leu-|-Tyr-Trp, in which cleavage of the -Tyr-|-Leu- and -Tyr-|-Trp bonds also occurs).. In terms of biological role, cleaves peptides in various proteins in a process that requires ATP hydrolysis. Has a chymotrypsin-like activity. Plays a major role in the degradation of misfolded proteins. The protein is ATP-dependent Clp protease proteolytic subunit (clpP-A) of Cyanophora paradoxa.